Here is a 106-residue protein sequence, read N- to C-terminus: SDO1-like protein C21C3.19 (106 aa).

It belongs to the SDO1-like family.

It localises to the cytoplasm. It is found in the nucleus. In terms of biological role, may play a role in RNA metabolism. The polypeptide is SDO1-like protein C21C3.19 (Schizosaccharomyces pombe (strain 972 / ATCC 24843) (Fission yeast)).